The following is a 328-amino-acid chain: Tetraacyldisaccharide 4'-kinase (328 aa).

52-59 is a binding site for ATP; sequence NAGGTGKT.

It belongs to the LpxK family.

It carries out the reaction a lipid A disaccharide + ATP = a lipid IVA + ADP + H(+). The protein operates within glycolipid biosynthesis; lipid IV(A) biosynthesis; lipid IV(A) from (3R)-3-hydroxytetradecanoyl-[acyl-carrier-protein] and UDP-N-acetyl-alpha-D-glucosamine: step 6/6. Functionally, transfers the gamma-phosphate of ATP to the 4'-position of a tetraacyldisaccharide 1-phosphate intermediate (termed DS-1-P) to form tetraacyldisaccharide 1,4'-bis-phosphate (lipid IVA). The sequence is that of Tetraacyldisaccharide 4'-kinase from Jannaschia sp. (strain CCS1).